The following is a 631-amino-acid chain: Fusexin 1 (631 aa).

An N-terminal signal peptide occupies residues 1–19 (MRRAALILAFVLFIGLSSA). Residues 20–90 (TVTSADSITY…THQDSKLKYS (71 aa)) form a domain I N-terminus region. The Extracellular segment spans residues 20-537 (TVTSADSITY…NLFGGSGSGD (518 aa)). The domain II N-terminus stretch occupies residues 91–170 (TSTSDELRDI…KLATPAYIDN (80 aa)). Positions 112, 146, 149, and 150 each coordinate Ca(2+). A disulfide bridge links Cys-125 with Cys-155. The segment at 143-148 (SVTSPV) is fusion loop, required for fusogenic activity, not required for membrane surface localization. The segment at 171–224 (PDEIFTAKAELQAGDKTIQSATLSNGDAGDGTVTDLGDSKISWNGNLDLGASEP) is domain I central section. Residues 225–316 (ENSRVIALYS…KDSSLDTGSF (92 aa)) are domain II C-terminus. A domain I C-terminus region spans residues 317–348 (VYDTPELLSYPSFTVYVDAGENGYIEVTKPTG). A domain III region spans residues 349-455 (DPDIISTSST…SVSVTGIQQS (107 aa)). Intrachain disulfides connect Cys-389–Cys-432, Cys-457–Cys-477, and Cys-490–Cys-506. The segment at 443-467 (DSTSVSVTGIQQSECNPGDQRREKN) is disordered. Residues 456-509 (ECNPGDQRREKNENDRWEIYTCQDNGLTYEYDVTCAEDEKAVAQGDNQFSCEKQ) form a domain IV, required for fusogenic activity region. Positions 510–537 (DDDSGGGDNTGSDSGLFSNLFGGSGSGD) are stem. A helical membrane pass occupies residues 538–558 (LLTQVHTALSILAGLVAGFFG). Residues 559–590 (YRGARWIHGETDIKGGFKLESRNVSRVKRGSP) are Cytoplasmic-facing. Residues 591–611 (VAGIVGAVLGFVVGYGVASVF) form a helical membrane-spanning segment. Position 612 (His-612) is a topological domain, extracellular. The chain crosses the membrane as a helical span at residues 613 to 630 (PVVQIIVVLGIAVGLYYF). Position 631 (Arg-631) is a topological domain, cytoplasmic.

It belongs to the HAP2/GCS1 family. Fusexin 1 subfamily. In terms of assembly, monomer in solution, crystallizes as a trimer in high salt (2.5 M NaCl, 0.2 M CaCl(2)). The trimer is stabilized by interdomain contacts and numerous Ca(2+) and Na(+) ions.

It is found in the cell surface. It localises to the cell membrane. Functionally, exhibits fusogenic activity. Mediates cell-cell fusion in mammalian cells when present in both cells (bilateral fusion). The protein is Fusexin 1 of Uncultured archaeon.